An 86-amino-acid polypeptide reads, in one-letter code: Muscarinic toxin-like protein (86 aa).

The signal sequence occupies residues 1–21; sequence MKTLLLTLAVVTMVCMDLGYT. Cystine bridges form between Cys24-Cys45, Cys38-Cys62, Cys66-Cys78, and Cys79-Cys84.

This sequence belongs to the three-finger toxin family. Short-chain subfamily. Orphan group VIII (haditoxin) sub-subfamily. In terms of assembly, homodimer; non-covalently linked. As to expression, expressed by the venom gland.

The protein resides in the secreted. Functionally, antagonist of muscle and neuronal nicotinic acetylcholine receptors (nAChR) with highest affinity for neuronal alpha-7/CHRNA7 nAChRs. This is Muscarinic toxin-like protein from Bungarus multicinctus (Many-banded krait).